A 262-amino-acid polypeptide reads, in one-letter code: Expansin-A21 (262 aa).

An N-terminal signal peptide occupies residues 1–29 (MKLLEKMTYVECFMIIMATWFMFISYSHG). Residues 64–169 (EGACGYGDLN…RRVPCAKTGG (106 aa)) form the Expansin-like EG45 domain. Positions 179 to 258 (NILTILPYNV…SWGFGQTFDG (80 aa)) constitute an Expansin-like CBD domain.

It belongs to the expansin family. Expansin A subfamily.

Its subcellular location is the secreted. It localises to the cell wall. The protein resides in the membrane. In terms of biological role, causes loosening and extension of plant cell walls by disrupting non-covalent bonding between cellulose microfibrils and matrix glucans. No enzymatic activity has been found. The chain is Expansin-A21 (EXPA21) from Arabidopsis thaliana (Mouse-ear cress).